The chain runs to 392 residues: Acetyl-CoA acetyltransferase (392 aa).

Catalysis depends on Cys-87, which acts as the Acyl-thioester intermediate. Residues His-348 and Cys-378 each act as proton acceptor in the active site.

Belongs to the thiolase-like superfamily. Thiolase family.

It is found in the cytoplasm. It carries out the reaction 2 acetyl-CoA = acetoacetyl-CoA + CoA. The protein operates within metabolic intermediate biosynthesis; (R)-mevalonate biosynthesis; (R)-mevalonate from acetyl-CoA: step 1/3. Involved in the production of polyhydroxyalkonic acids (PHAs), composed primarily of 3-hydroxybutyric acid (3HB) and 3-hydroxyvaleric acid (3HV). The sequence is that of Acetyl-CoA acetyltransferase (phaA) from Chromobacterium violaceum (strain ATCC 12472 / DSM 30191 / JCM 1249 / CCUG 213 / NBRC 12614 / NCIMB 9131 / NCTC 9757 / MK).